The following is a 128-amino-acid chain: uncharacterized protein (128 aa).

2 helical membrane passes run 33–53 and 61–81; these read LLYISIIFLFLNYVVDIVCYV and FFCWVFLNLGVIGIIITVIIY. Over residues 99–120 the composition is skewed to polar residues; that stretch reads DSLNQNVGESQSNEPPKYTSTF. The tract at residues 99-128 is disordered; sequence DSLNQNVGESQSNEPPKYTSTFMDELDKQD.

Its subcellular location is the membrane. This is an uncharacterized protein from Schizosaccharomyces pombe (strain 972 / ATCC 24843) (Fission yeast).